The following is a 359-amino-acid chain: UDP-N-acetylglucosamine--N-acetylmuramyl-(pentapeptide) pyrophosphoryl-undecaprenol N-acetylglucosamine transferase (359 aa).

UDP-N-acetyl-alpha-D-glucosamine-binding positions include Ser-15–Gly-17, Asn-127, Arg-164, Ser-192, Ile-246, Ala-265–Glu-270, and Gln-290.

It belongs to the glycosyltransferase 28 family. MurG subfamily.

The protein localises to the cell membrane. It carries out the reaction di-trans,octa-cis-undecaprenyl diphospho-N-acetyl-alpha-D-muramoyl-L-alanyl-D-glutamyl-meso-2,6-diaminopimeloyl-D-alanyl-D-alanine + UDP-N-acetyl-alpha-D-glucosamine = di-trans,octa-cis-undecaprenyl diphospho-[N-acetyl-alpha-D-glucosaminyl-(1-&gt;4)]-N-acetyl-alpha-D-muramoyl-L-alanyl-D-glutamyl-meso-2,6-diaminopimeloyl-D-alanyl-D-alanine + UDP + H(+). The protein operates within cell wall biogenesis; peptidoglycan biosynthesis. Its function is as follows. Cell wall formation. Catalyzes the transfer of a GlcNAc subunit on undecaprenyl-pyrophosphoryl-MurNAc-pentapeptide (lipid intermediate I) to form undecaprenyl-pyrophosphoryl-MurNAc-(pentapeptide)GlcNAc (lipid intermediate II). This Wigglesworthia glossinidia brevipalpis protein is UDP-N-acetylglucosamine--N-acetylmuramyl-(pentapeptide) pyrophosphoryl-undecaprenol N-acetylglucosamine transferase.